The chain runs to 191 residues: Protein GrpE (191 aa).

A compositionally biased stretch (basic and acidic residues) spans 1-10 (MNHEEQKVET). The tract at residues 1–28 (MNHEEQKVETMEQVEAQPVEPTDVDSEV) is disordered.

It belongs to the GrpE family. Homodimer.

It is found in the cytoplasm. In terms of biological role, participates actively in the response to hyperosmotic and heat shock by preventing the aggregation of stress-denatured proteins, in association with DnaK and GrpE. It is the nucleotide exchange factor for DnaK and may function as a thermosensor. Unfolded proteins bind initially to DnaJ; upon interaction with the DnaJ-bound protein, DnaK hydrolyzes its bound ATP, resulting in the formation of a stable complex. GrpE releases ADP from DnaK; ATP binding to DnaK triggers the release of the substrate protein, thus completing the reaction cycle. Several rounds of ATP-dependent interactions between DnaJ, DnaK and GrpE are required for fully efficient folding. In Aeromonas salmonicida (strain A449), this protein is Protein GrpE.